A 444-amino-acid chain; its full sequence is Transcriptional coactivator nsrH (444 aa).

The HTH iclR-type domain maps to 74-144 (ASQVSEILAC…ERDHVAHTPL (71 aa)). Positions 104 to 123 (IKDIADLTNVPESRLRRIIR) form a DNA-binding region, H-T-H motif.

Its subcellular location is the nucleus. Its function is as follows. Transcriptional coactivator; part of the gene cluster that mediates the biosynthesis of the tetrahydroxanthone dimer neosartorin, which exhibits antibacterial activity. The sequence is that of Transcriptional coactivator nsrH from Aspergillus novofumigatus (strain IBT 16806).